The following is an 862-amino-acid chain: uncharacterized protein (862 aa).

Positions 1–25 (MKPRPYSVFLFLHIVFYSLLSAVNG) are cleaved as a signal peptide. The Lumenal segment spans residues 26 to 61 (SPSLDYFETCSNFVPRAGIPTFSPYAVIKNFDEVNR). Residues 62–82 (MYYIQVVGNLSGVITIVGGNG) traverse the membrane as a helical segment. Residues 83–187 (SHIHAASVYS…STTLYYFYPV (105 aa)) lie on the Cytoplasmic side of the membrane. The chain crosses the membrane as a helical span at residues 188–208 (ISYLVVVSLAYVSFSIIYALF). Topologically, residues 209–230 (LNPWTGSLDPFKSIFNFNMDPD) are lumenal. A helical membrane pass occupies residues 231–250 (ALRLTSLGFFDFVQYLQFAV). Over 251 to 256 (STAQVS) the chain is Cytoplasmic. The helical transmembrane segment at 257 to 277 (VMFPKFYINIMAALSWGTALF) threads the bilayer. The Lumenal segment spans residues 278 to 329 (RFPIFSEPAEYQFADFADLSVASSSYADYLPKSYGMYSFLDSIGIGTACWLP). A helical transmembrane segment spans residues 330 to 350 (FLIVMVIYLFAALFVALLVIF). The Cytoplasmic segment spans residues 351–372 (LKWLMSRIFNETIAETRWDTWS). A helical membrane pass occupies residues 373 to 393 (FIAGSLIRLYFLTYFPTVAYM). Over 394–404 (SFQFVAPPTGY) the chain is Lumenal. The chain crosses the membrane as a helical span at residues 405 to 425 (EIIPVLWFIFFGIFIPVYLYM). The Cytoplasmic segment spans residues 426–457 (NLAFVEPSSKLLEDQTYLHLFGSIYNSFREER). A helical membrane pass occupies residues 458–480 (VMFWIFPIAVQFMRGITVGVIGS). The Lumenal segment spans residues 481-483 (SGS). A helical membrane pass occupies residues 484 to 503 (AQLAIFFILEVANVVAYAYV). The Cytoplasmic portion of the chain corresponds to 504-514 (RPHFPQTSMNT). A helical membrane pass occupies residues 515 to 535 (LNTFISTMRLITVILMIPLDP). Over 536–545 (RLKVLGISRD) the chain is Lumenal. Residues 546-566 (LLAYAILFIHIMVCILFLLLS) form a helical membrane-spanning segment. Residues 567-862 (TQRFMEVSAR…AESAWSIPHP (296 aa)) lie on the Cytoplasmic side of the membrane. Residues 668–686 (QASSLVPSKNNTASSSSLM) are compositionally biased toward polar residues. Disordered regions lie at residues 668–717 (QASS…SVRK) and 815–862 (VLRS…IPHP). The span at 689 to 700 (SPVTPSSPYSTS) shows a compositional bias: low complexity. The span at 834–850 (EPSRDEQYSMERKKTDD) shows a compositional bias: basic and acidic residues.

This sequence belongs to the transient receptor potential (TRP) ion channel family.

Its subcellular location is the cytoplasm. It is found in the golgi apparatus membrane. This is an uncharacterized protein from Schizosaccharomyces pombe (strain 972 / ATCC 24843) (Fission yeast).